A 120-amino-acid chain; its full sequence is Large ribosomal subunit protein uL24 (120 aa).

Belongs to the universal ribosomal protein uL24 family. Part of the 50S ribosomal subunit.

Its function is as follows. One of two assembly initiator proteins, it binds directly to the 5'-end of the 23S rRNA, where it nucleates assembly of the 50S subunit. Functionally, one of the proteins that surrounds the polypeptide exit tunnel on the outside of the subunit. The protein is Large ribosomal subunit protein uL24 of Pseudarthrobacter chlorophenolicus (strain ATCC 700700 / DSM 12829 / CIP 107037 / JCM 12360 / KCTC 9906 / NCIMB 13794 / A6) (Arthrobacter chlorophenolicus).